The chain runs to 642 residues: MPVITLPDGSQRSFDHAVSVMDIAMDIGPGLAKACIAGRVNGELVDAVDPIVDDASVAIITAKDEAGLEIIRHSCAHLLGHAIKQLWPDTKMAIGPVIDNGFYYDVDLDRTLTQEDIELLEKRMHQLAETNYDVIKKKVSWQEARDAFAARGENYKTTILDENISHDDRPGLYHHQEYVDMCRGPHVPNMRFCHHFKLQKISGAYWRGDSNNKMLQRIYGTAWADKKQLAAYLLRLEEAAKRDHRKIGKQLDLYHMQEEAPGMVFWHNDGWTIFRELEVFVRTKLKEYEYQEVKGPFMMDRVLWEKTGHWENYKEAMFTTSSENREYCIKPMNCPGHVQIFNQGLKSYRDLPLRMAEFGSCHRNEPSGALHGLMRVRGFTQDDAHIFCTEEQVRDEVNSCIKMVYDMYSTFGFEKIVVKLSTRPEKRIGSDDLWDRSEADLAAALKENGIPFEYQPGEGAFYGPKIEFTLHDCLDRAWQCGTVQLDFSLPGRLSASYVGESNERQVPVMIHRAILGSMERFIGILTEEYAGFFPTWLAPVQVVVMNITDGQSEYVAELTRKLQNAGIRAKADLRNEKIGFKIREHTLRRVPYMLVCGDKEVEAGKVAVRTRRGKDLGSIDVNEVIAKLQDEIRSRNLHQLEE.

A TGS domain is found at 1 to 61 (MPVITLPDGS…VDDASVAIIT (61 aa)). Positions 243-534 (DHRKIGKQLD…LTEEYAGFFP (292 aa)) are catalytic. 3 residues coordinate Zn(2+): Cys-334, His-385, and His-511.

Belongs to the class-II aminoacyl-tRNA synthetase family. In terms of assembly, homodimer. Zn(2+) serves as cofactor.

It localises to the cytoplasm. The catalysed reaction is tRNA(Thr) + L-threonine + ATP = L-threonyl-tRNA(Thr) + AMP + diphosphate + H(+). Its function is as follows. Catalyzes the attachment of threonine to tRNA(Thr) in a two-step reaction: L-threonine is first activated by ATP to form Thr-AMP and then transferred to the acceptor end of tRNA(Thr). Also edits incorrectly charged L-seryl-tRNA(Thr). The polypeptide is Threonine--tRNA ligase (Erwinia tasmaniensis (strain DSM 17950 / CFBP 7177 / CIP 109463 / NCPPB 4357 / Et1/99)).